Here is a 442-residue protein sequence, read N- to C-terminus: Hydroxycinnamoyltransferase 2 (442 aa).

Active-site proton acceptor residues include histidine 159 and aspartate 389.

Belongs to the plant acyltransferase family. In terms of tissue distribution, expressed in roots and leaves. Expressed at low levels in stems and seeds.

In terms of biological role, hydroxycinnamoyl transferase that catalyzes the transfer of an acyl from p-coumaryol-CoA to various acyl acceptors. Can use feruloyl-CoA and caffeoyl-CoA as acyl donors. The polypeptide is Hydroxycinnamoyltransferase 2 (Oryza sativa subsp. japonica (Rice)).